The following is a 626-amino-acid chain: Glyco-Gag protein (626 aa).

Residues 1 to 67 (LGDVPGTSGA…VWSRSRAARP (67 aa)) lie on the Cytoplasmic side of the membrane. The chain crosses the membrane as a helical span at residues 68-86 (VCCSIVLCCFCLTVFLYLS). Residues 87–626 (ENMGQTATTP…PQASLLTLDD (540 aa)) are Extracellular-facing. Residue asparagine 113 is glycosylated (N-linked (GlcNAc...) asparagine; by host). 2 stretches are compositionally biased toward pro residues: residues 199-212 (PSAP…PLST) and 249-261 (DPPP…PPSP). A disordered region spans residues 199 to 306 (PSAPSLPPEP…STTSQAFPLR (108 aa)). Asparagine 480 is a glycosylation site (N-linked (GlcNAc...) asparagine; by host). 2 stretches are compositionally biased toward basic and acidic residues: residues 522-554 (RETP…EKER) and 574-607 (RQDR…DCPK). The tract at residues 522–626 (RETPEEREER…PQASLLTLDD (105 aa)) is disordered. The CCHC-type zinc finger occupies 590 to 607 (DQCAYCKEKGHWARDCPK).

Post-translationally, glycosylated by host. Cleaved by host near the middle of the molecule, releasing the c-terminal half containing capsid and nucleoprotein domains op GAG.

It is found in the host cell membrane. Functionally, plays a role in viral particle release. Presumably acts by facilitating the fission of the virion bud at the cell surface. May prevent the antiviral activity of murine APOBEC3. This chain is Glyco-Gag protein, found in Mus musculus (Mouse).